Reading from the N-terminus, the 227-residue chain is Class I hydrophobin 4 (227 aa).

An N-terminal signal peptide occupies residues 1-18 (MQFTTFALLAVAAATASA). Intrachain disulfides connect Cys-159/Cys-207, Cys-167/Cys-200, Cys-168/Cys-186, and Cys-208/Cys-222. N-linked (GlcNAc...) asparagine glycosylation is found at Asn-190 and Asn-219.

Belongs to the fungal hydrophobin family. Self-assembles to form functional amyloid fibrils called rodlets. Self-assembly into fibrillar rodlets occurs spontaneously at hydrophobic:hydrophilic interfaces and the rodlets further associate laterally to form amphipathic monolayers. As to expression, expressed in conidia and aerial hyphae.

The protein resides in the secreted. It is found in the cell wall. Functionally, aerial growth, conidiation, and dispersal of filamentous fungi in the environment rely upon a capability of their secreting small amphipathic proteins called hydrophobins (HPBs) with low sequence identity. Class I can self-assemble into an outermost layer of rodlet bundles on aerial cell surfaces, conferring cellular hydrophobicity that supports fungal growth, development and dispersal; whereas Class II form highly ordered films at water-air interfaces through intermolecular interactions but contribute nothing to the rodlet structure. Hcf-4 is a class I hydrophobin that is involved in the development and germination of conidia. This is Class I hydrophobin 4 from Passalora fulva (Tomato leaf mold).